A 274-amino-acid polypeptide reads, in one-letter code: tRNA-cytidine(32) 2-sulfurtransferase (274 aa).

The short motif at 40 to 45 (SGGKDS) is the PP-loop motif element. Residues C115, C118, and C206 each coordinate [4Fe-4S] cluster.

This sequence belongs to the TtcA family. Homodimer. Mg(2+) is required as a cofactor. The cofactor is [4Fe-4S] cluster.

The protein localises to the cytoplasm. The catalysed reaction is cytidine(32) in tRNA + S-sulfanyl-L-cysteinyl-[cysteine desulfurase] + AH2 + ATP = 2-thiocytidine(32) in tRNA + L-cysteinyl-[cysteine desulfurase] + A + AMP + diphosphate + H(+). It participates in tRNA modification. In terms of biological role, catalyzes the ATP-dependent 2-thiolation of cytidine in position 32 of tRNA, to form 2-thiocytidine (s(2)C32). The sulfur atoms are provided by the cysteine/cysteine desulfurase (IscS) system. The polypeptide is tRNA-cytidine(32) 2-sulfurtransferase (Pseudomonas putida (strain ATCC 47054 / DSM 6125 / CFBP 8728 / NCIMB 11950 / KT2440)).